Here is a 345-residue protein sequence, read N- to C-terminus: Histidinol-phosphate aminotransferase (345 aa).

At lysine 206 the chain carries N6-(pyridoxal phosphate)lysine.

It belongs to the class-II pyridoxal-phosphate-dependent aminotransferase family. Histidinol-phosphate aminotransferase subfamily. As to quaternary structure, homodimer. Requires pyridoxal 5'-phosphate as cofactor.

It carries out the reaction L-histidinol phosphate + 2-oxoglutarate = 3-(imidazol-4-yl)-2-oxopropyl phosphate + L-glutamate. It participates in amino-acid biosynthesis; L-histidine biosynthesis; L-histidine from 5-phospho-alpha-D-ribose 1-diphosphate: step 7/9. In Bacteroides fragilis (strain YCH46), this protein is Histidinol-phosphate aminotransferase.